We begin with the raw amino-acid sequence, 664 residues long: MDNKLEKMKELVEELNQYAYEYYVLDNPSISDKEYDLKYDELVILEKKTEVTLPYSPTQRVGDKILGEFSKYTHKGRLWSLDKAQNMEQLIEWHNRNLKVIEQYNSMSEDKLPELRYIVTKKFDGLTVNCTYDENGILIKSATRGTGIIGEDITAQIKTIKTVPLKIKNSHVIEVHGEAIMTKTAFEEYNKAAQVPLKNLRNGAAGALRNLDIKETARRNLSAFFYDVGYNEGPEFKSYREMMNFIKNMGLPQDKYIKECTNMEEVEKEIEYIESIRGELDYDIDGAVIVVDDIKTREILGYTIKFPKWAIAYKFEAKEITTKLLDVEWNVGRSGRVTPTALLEPVELGGVTVKRATLNNMDDIKRKNVKLGAKVLVRRSNDVIPEIMGVVEESLEESEEIQAPDRCPYCNSHLVQNGVHYYCENTLSCKPQMVKSIVHFASREAMNIAGFSEKTAEQLFEKLDIKSIADLYKIKKEELLTLEKFKDKKSQNLIDAIQNSKNCDLASFIYALGIPNVGKKTANDLVMKFKTLESIKNTTIEQLVEVPDVGEIVAKSIYDFFEDEKIISNIEELLNLGVKPYYEEERIDENPFMDKTIVVTGSLNNYSRGEIKDKLQSLGAKVSSSVSKNTDYVLVGEKPGSKYEKAIELGVKVINEEEFSNKIK.

NAD(+) contacts are provided by residues 32 to 36 (DKEYD) and 80 to 81 (SL). K122 (N6-AMP-lysine intermediate) is an active-site residue. Positions 144, 178, and 314 each coordinate NAD(+). The Zn(2+) site is built by C407, C410, C423, and C429. The BRCT domain occupies 587-664 (IDENPFMDKT…NEEEFSNKIK (78 aa)).

It belongs to the NAD-dependent DNA ligase family. LigA subfamily. It depends on Mg(2+) as a cofactor. Requires Mn(2+) as cofactor.

It catalyses the reaction NAD(+) + (deoxyribonucleotide)n-3'-hydroxyl + 5'-phospho-(deoxyribonucleotide)m = (deoxyribonucleotide)n+m + AMP + beta-nicotinamide D-nucleotide.. DNA ligase that catalyzes the formation of phosphodiester linkages between 5'-phosphoryl and 3'-hydroxyl groups in double-stranded DNA using NAD as a coenzyme and as the energy source for the reaction. It is essential for DNA replication and repair of damaged DNA. This chain is DNA ligase, found in Clostridium botulinum (strain Okra / Type B1).